The sequence spans 246 residues: Proteasome subunit alpha type-6 (246 aa).

The protein belongs to the peptidase T1A family. In terms of assembly, the 26S proteasome consists of a 20S proteasome core and two 19S regulatory subunits. The 20S proteasome core is composed of 28 subunits that are arranged in four stacked rings, resulting in a barrel-shaped structure. The two end rings are each formed by seven alpha subunits, and the two central rings are each formed by seven beta subunits. The catalytic chamber with the active sites is on the inside of the barrel.

It is found in the cytoplasm. The protein localises to the nucleus. The proteasome is a multicatalytic proteinase complex which is characterized by its ability to cleave peptides with Arg, Phe, Tyr, Leu, and Glu adjacent to the leaving group at neutral or slightly basic pH. The proteasome has an ATP-dependent proteolytic activity. In Caenorhabditis elegans, this protein is Proteasome subunit alpha type-6 (pas-1).